The primary structure comprises 116 residues: Large ribosomal subunit protein eL18 (116 aa).

It belongs to the eukaryotic ribosomal protein eL18 family. As to quaternary structure, part of the 50S ribosomal subunit. Interacts weakly with proteins L4 and L15. Has been cross-linked to L4.

Its function is as follows. Stabilizes the tertiary rRNA structure within the 23S rRNA domain (domain II) to which it binds. The chain is Large ribosomal subunit protein eL18 (rpl18e) from Haloarcula marismortui (strain ATCC 43049 / DSM 3752 / JCM 8966 / VKM B-1809) (Halobacterium marismortui).